A 453-amino-acid chain; its full sequence is Odorant receptor 83a (453 aa).

Over 1–28 (MKSTFKEERIKDDSKRRDLFVFVRQTMC) the chain is Cytoplasmic. The helical transmembrane segment at 29 to 49 (IAAMYPFGYYVNGSGVLAVLV) threads the bilayer. At 50–85 (RFCDLTYELFNYFVSVHIAGLYICTIYINYGQGDLD) the chain is on the extracellular side. A helical transmembrane segment spans residues 86-106 (FFVNCLIQTIIYLWTIAMKLY). The Cytoplasmic portion of the chain corresponds to 107–148 (FRRFRPGLLNTILSNINDEYETRSAVGFSFVTMAGSYRMSKL). The chain crosses the membrane as a helical span at residues 149 to 169 (WIKTYVYCCYIGTIFWLALPI). Residues 170 to 203 (AYRDRSLPLACWYPFDYTQPGVYEVVFLLQAMGQ) are Extracellular-facing. Residues 204–224 (IQVAASFASSSGLHMVLCVLI) form a helical membrane-spanning segment. The Cytoplasmic portion of the chain corresponds to 225 to 322 (SGQYDVLFCS…ALKKIESFYS (98 aa)). A helical membrane pass occupies residues 323 to 343 (PIWFVKIGEVTFLMCLVAFVS). Over 344 to 359 (TKSTAANSFMRMVSLG) the chain is Extracellular. A helical transmembrane segment spans residues 360–380 (QYLLLVLYELFIICYFADIVF). The Cytoplasmic portion of the chain corresponds to 381–408 (QNSQRCGEALWRSPWQRHLKDVRSDYMF). A helical membrane pass occupies residues 409–429 (FMLNSRRQFQLTAGKISNLNV). Residues 430–453 (DRFRGTITTAFSFLTLLQKMDARE) lie on the Extracellular side of the membrane.

Belongs to the insect chemoreceptor superfamily. Heteromeric odorant receptor channel (TC 1.A.69) family. Or2a subfamily. Interacts with Orco. Complexes exist early in the endomembrane system in olfactory sensory neurons (OSNs), coupling these complexes to the conserved ciliary trafficking pathway.

Its subcellular location is the cell membrane. In terms of biological role, odorant receptor which mediates acceptance or avoidance behavior, depending on its substrates. The odorant receptor repertoire encodes a large collection of odor stimuli that vary widely in identity, intensity, and duration. May form a complex with Orco to form odorant-sensing units, providing sensitive and prolonged odorant signaling and calcium permeability. Involved in the behavioral responses to pentanol, ethyl acetate, and propyl acetate. The polypeptide is Odorant receptor 83a (Or83a) (Drosophila melanogaster (Fruit fly)).